The chain runs to 444 residues: Vacuolar protein sorting-associated protein 4B (444 aa).

An MIT domain is found at 4–82 (TNTNLQKAID…KEYLKKKEKK (79 aa)). Positions 19 to 82 (AQEDKAGNYE…KEYLKKKEKK (64 aa)) form a coiled coil. The disordered stretch occupies residues 77 to 118 (KKKEKKPQKPVKEEQSGPVDEKGNDSDGEAESDDPEKKKLQN). Residues 86 to 101 (PVKEEQSGPVDEKGND) show a composition bias toward basic and acidic residues. Phosphoserine occurs at positions 102 and 108. An ATP-binding site is contributed by 174–181 (GPPGTGKS). S410 bears the Phosphoserine mark.

It belongs to the AAA ATPase family. In terms of assembly, proposed to be monomeric or homodimeric in nucleotide-free form and to oligomerize upon binding to ATP to form two stacked hexameric or heptameric rings with a central pore through which ESCRT-III substrates are translocated in an ATP-dependent manner. In vitro, associates on the inside of a helical tubular structure formed by a CHMP2A-CHMP3 polymer. Interacts with CHMP1A, CHMP1B, CHMP4B and CHMP6. Interacts with CHMP2A. Interacts with VPS4A; the interaction suggests a heteromeric assembly with VPS4A. Interacts with VTA1. As to expression, high level expression seen in the kidney. It is also expressed in the heart, brain, spleen, lung, liver, skeletal muscle, and testis.

It localises to the late endosome membrane. The enzyme catalyses ATP + H2O = ADP + phosphate + H(+). In terms of biological role, involved in late steps of the endosomal multivesicular bodies (MVB) pathway. Recognizes membrane-associated ESCRT-III assemblies and catalyzes their disassembly, possibly in combination with membrane fission. Redistributes the ESCRT-III components to the cytoplasm for further rounds of MVB sorting. MVBs contain intraluminal vesicles (ILVs) that are generated by invagination and scission from the limiting membrane of the endosome and mostly are delivered to lysosomes enabling degradation of membrane proteins, such as stimulated growth factor receptors, lysosomal enzymes and lipids. VPS4A/B are required for the exosomal release of SDCBP, CD63 and syndecan. Its function is as follows. (Microbial infection) In conjunction with the ESCRT machinery also appears to function in topologically equivalent membrane fission events, such as the terminal stages of cytokinesis and enveloped virus budding (lentiviruses). The sequence is that of Vacuolar protein sorting-associated protein 4B from Mus musculus (Mouse).